The following is a 387-amino-acid chain: Delta(12)-acyl-lipid-desaturase (387 aa).

The interval 1–31 (MGAGGRMTVPNKWEGEGDEKSQKPVQRVPSA) is disordered. Residues 13-22 (WEGEGDEKSQ) are compositionally biased toward basic and acidic residues. Helical transmembrane passes span 58 to 78 (SYVL…TTYI) and 88 to 108 (AAWP…WVIA). Residues 109-113 (HECGH) carry the Histidine box-1 motif. Residues 121–141 (WVDDCVGLVLHSALLVPYFSW) form a helical membrane-spanning segment. Positions 145 to 149 (HRRHH) match the Histidine box-2 motif. 3 helical membrane-spanning segments follow: residues 183–203 (VMTL…LNVS), 229–249 (IYIS…IAAA), and 251–271 (GLAW…AFLV). Residues 319-323 (HVAHH) carry the Histidine box-3 motif.

It belongs to the fatty acid desaturase type 1 family.

The protein localises to the membrane. Its pathway is lipid metabolism; polyunsaturated fatty acid biosynthesis. In terms of biological role, delta(12)-fatty acid desaturase producing in a heterologous system linoleic acid (18:2(9Z,12Z)) and to a lower extent hexadecadienoic acid (16:2(9Z,12Z)). The sequence is that of Delta(12)-acyl-lipid-desaturase from Punica granatum (Pomegranate).